A 405-amino-acid chain; its full sequence is Probable tRNA sulfurtransferase (405 aa).

In terms of domain architecture, THUMP spans 60 to 165 (TEVDKRLKKV…QDAVYISNQL (106 aa)). Residues 183-184 (ML), 208-209 (HF), Arg265, Gly287, and Gln296 each bind ATP.

This sequence belongs to the ThiI family.

The protein resides in the cytoplasm. It carries out the reaction [ThiI sulfur-carrier protein]-S-sulfanyl-L-cysteine + a uridine in tRNA + 2 reduced [2Fe-2S]-[ferredoxin] + ATP + H(+) = [ThiI sulfur-carrier protein]-L-cysteine + a 4-thiouridine in tRNA + 2 oxidized [2Fe-2S]-[ferredoxin] + AMP + diphosphate. The catalysed reaction is [ThiS sulfur-carrier protein]-C-terminal Gly-Gly-AMP + S-sulfanyl-L-cysteinyl-[cysteine desulfurase] + AH2 = [ThiS sulfur-carrier protein]-C-terminal-Gly-aminoethanethioate + L-cysteinyl-[cysteine desulfurase] + A + AMP + 2 H(+). The protein operates within cofactor biosynthesis; thiamine diphosphate biosynthesis. Catalyzes the ATP-dependent transfer of a sulfur to tRNA to produce 4-thiouridine in position 8 of tRNAs, which functions as a near-UV photosensor. Also catalyzes the transfer of sulfur to the sulfur carrier protein ThiS, forming ThiS-thiocarboxylate. This is a step in the synthesis of thiazole, in the thiamine biosynthesis pathway. The sulfur is donated as persulfide by IscS. The protein is Probable tRNA sulfurtransferase of Lactobacillus acidophilus (strain ATCC 700396 / NCK56 / N2 / NCFM).